The chain runs to 836 residues: Zinc fingers and homeoboxes protein 2 (836 aa).

The segment at 24–58 (LEEADRAKDKGLGVPPSDVSKERWAAEPEPSSKES) is disordered. Residues 27–77 (ADRAKDKGLGVPPSDVSKERWAAEPEPSSKESEVVEVRSVGESQSKKLQGG) are interaction with EFNB1. Residues 42-58 (VSKERWAAEPEPSSKES) show a composition bias toward basic and acidic residues. 2 consecutive C2H2-type zinc fingers follow at residues 78–101 (YECK…DMQH) and 110–133 (YVCA…SKFH). A disordered region spans residues 168–210 (SAPGSSDNDPGVSVGKTATVKTGKQKADAKKVPKKPDEAAPDN). Basic and acidic residues predominate over residues 192-210 (QKADAKKVPKKPDEAAPDN). A required for homodimerization region spans residues 195–358 (DAKKVPKKPD…PAQLTPTKVS (164 aa)). 4 consecutive DNA-binding regions (homeobox) follow at residues 263–324 (NTTK…WSPE), 439–501 (TPAS…IVHI), 530–591 (AQKF…EQAV), and 628–690 (SPSS…TLSW). The segment at 263 to 446 (NTTKYNSALD…PLTPASDRKK (184 aa)) is required for repressor activity. Positions 263–497 (NTTKYNSALD…SDHRYRCQRG (235 aa)) are required for interaction with NFYA. A required for nuclear localization region spans residues 317–446 (HGISWSPEEV…PLTPASDRKK (130 aa)). Residues 404-442 (GQKRPLVTPQAAPEPKRPHIAQVPEPPPKVANTPLTPAS) form a disordered region. A Glycyl lysine isopeptide (Lys-Gly) (interchain with G-Cter in SUMO2) cross-link involves residue Lys-455. 2 stretches are compositionally biased toward basic and acidic residues: residues 700 to 709 (SDDHGHDVAS) and 730 to 746 (YAKD…EKLV). The disordered stretch occupies residues 700–836 (SDDHGHDVAS…DSTPAEAGQA (137 aa)). Residues Ser-824 and Ser-826 each carry the phosphoserine modification.

Belongs to the ZHX family. In terms of assembly, homodimer (via homeobox domain 1). Heterodimer with ZHX1 (via homeobox domain 1). Heterodimer with ZHX3 (via homeobox domain 1). Heterodimerization with ZHX1 is not necessary for repressor activity. Interacts (via homeobox domain) with NFYA (via N-terminus). Interacts with EFNB1 intracellular domain peptide; the interaction enhances ZHX2 transcriptional repression activity.

The protein localises to the nucleus. Functionally, acts as a transcriptional repressor. Represses the promoter activity of the CDC25C gene stimulated by NFYA. May play a role in retinal development where it regulates the composition of bipolar cell populations, by promoting differentiation of bipolar OFF-type cells. In the brain, may promote maintenance and suppress differentiation of neural progenitor cells in the developing cortex. This chain is Zinc fingers and homeoboxes protein 2 (Zhx2), found in Rattus norvegicus (Rat).